A 397-amino-acid chain; its full sequence is MSESVHTNTSLWSKGMKAVIVAQFLSAFGDNALLFATLALLKAQFYPEWSQPILQMVFVGAYILFAPFVGQVADSFAKGRVMMFANGLKLLGAASICFGINPFLGYTLVGVGAAAYSPAKYGILGELTTGSKLVKANGLMEASTIAAILLGSVAGGVLADWHVLVALAACALAYGGAVVANIYIPKLAAARPGQSWNLINMTRSFLNACTSLWRNGETRFSLVGTSLFWGAGVTLRFLLVLWVPVALGITDNATPTYLNAMVAIGIVVGAGAAAKLVTLETVSRCMPAGILIGVVVLIFSLQHELLPAYALLMLIGVMGGFFVVPLNALLQERGKKSVGAGNAIAVQNLGENSAMLLMLGIYSLAVMIGIPVVPIGIGFGALFALAITALWIWQRRH.

Residues 1-17 (MSESVHTNTSLWSKGMK) are Periplasmic-facing. A helical membrane pass occupies residues 18-38 (AVIVAQFLSAFGDNALLFATL). Topologically, residues 39-52 (ALLKAQFYPEWSQP) are cytoplasmic. The chain crosses the membrane as a helical span at residues 53–73 (ILQMVFVGAYILFAPFVGQVA). Topologically, residues 74–90 (DSFAKGRVMMFANGLKL) are periplasmic. The helical transmembrane segment at 91–111 (LGAASICFGINPFLGYTLVGV) threads the bilayer. Residues 112 to 144 (GAAAYSPAKYGILGELTTGSKLVKANGLMEAST) lie on the Cytoplasmic side of the membrane. A helical transmembrane segment spans residues 145-165 (IAAILLGSVAGGVLADWHVLV). Position 166 (Ala166) is a topological domain, periplasmic. The chain crosses the membrane as a helical span at residues 167–187 (LAACALAYGGAVVANIYIPKL). Residues 188–226 (AAARPGQSWNLINMTRSFLNACTSLWRNGETRFSLVGTS) are Cytoplasmic-facing. The chain crosses the membrane as a helical span at residues 227 to 247 (LFWGAGVTLRFLLVLWVPVAL). The Periplasmic portion of the chain corresponds to 248–256 (GITDNATPT). A helical transmembrane segment spans residues 257–277 (YLNAMVAIGIVVGAGAAAKLV). Over 278–280 (TLE) the chain is Cytoplasmic. Residues 281-301 (TVSRCMPAGILIGVVVLIFSL) form a helical membrane-spanning segment. At 302-304 (QHE) the chain is on the periplasmic side. The helical transmembrane segment at 305-325 (LLPAYALLMLIGVMGGFFVVP) threads the bilayer. The Cytoplasmic segment spans residues 326–343 (LNALLQERGKKSVGAGNA). A helical transmembrane segment spans residues 344 to 364 (IAVQNLGENSAMLLMLGIYSL). Over 365-366 (AV) the chain is Periplasmic. The helical transmembrane segment at 367-387 (MIGIPVVPIGIGFGALFALAI) threads the bilayer. Over 388–397 (TALWIWQRRH) the chain is Cytoplasmic.

It belongs to the major facilitator superfamily. LplT (TC 2.A.1.42) family.

The protein localises to the cell inner membrane. Functionally, catalyzes the facilitated diffusion of 2-acyl-glycero-3-phosphoethanolamine (2-acyl-GPE) into the cell. This Escherichia coli O8 (strain IAI1) protein is Lysophospholipid transporter LplT.